A 177-amino-acid chain; its full sequence is Ubiquinol-cytochrome c reductase iron-sulfur subunit (177 aa).

The helical transmembrane segment at 18–38 (IVLTASSVAAVGAACAFWPII) threads the bilayer. One can recognise a Rieske domain in the interval 88-175 (ARAVKMSELI…YIFISDTKIR (88 aa)). Residues C120, H122, C139, and H142 each coordinate [2Fe-2S] cluster. C125 and C141 are joined by a disulfide.

It belongs to the Rieske iron-sulfur protein family. In terms of assembly, the main subunits of complex b-c1 are: cytochrome b, cytochrome c1 and the Rieske protein. [2Fe-2S] cluster is required as a cofactor.

The protein resides in the cell membrane. The catalysed reaction is a quinol + 2 Fe(III)-[cytochrome c](out) = a quinone + 2 Fe(II)-[cytochrome c](out) + 2 H(+)(out). In terms of biological role, component of the ubiquinol-cytochrome c reductase complex (complex III or cytochrome b-c1 complex), which is a respiratory chain that generates an electrochemical potential coupled to ATP synthesis. This chain is Ubiquinol-cytochrome c reductase iron-sulfur subunit (petA), found in Rickettsia typhi (strain ATCC VR-144 / Wilmington).